A 956-amino-acid polypeptide reads, in one-letter code: Valine--tRNA ligase (956 aa).

A 'HIGH' region motif is present at residues 69–79 (PNITGVLHMGH). The 'KMSKS' region signature appears at 566-570 (KMSKS). Position 569 (lysine 569) interacts with ATP. A coiled-coil region spans residues 885-911 (LCARLQKAWQKARQKVQQVERKLADAQ).

The protein belongs to the class-I aminoacyl-tRNA synthetase family. ValS type 1 subfamily. Monomer.

Its subcellular location is the cytoplasm. The catalysed reaction is tRNA(Val) + L-valine + ATP = L-valyl-tRNA(Val) + AMP + diphosphate. Its function is as follows. Catalyzes the attachment of valine to tRNA(Val). As ValRS can inadvertently accommodate and process structurally similar amino acids such as threonine, to avoid such errors, it has a 'posttransfer' editing activity that hydrolyzes mischarged Thr-tRNA(Val) in a tRNA-dependent manner. In Treponema pallidum (strain Nichols), this protein is Valine--tRNA ligase.